We begin with the raw amino-acid sequence, 188 residues long: Elongation factor P (188 aa).

Belongs to the elongation factor P family.

It localises to the cytoplasm. It functions in the pathway protein biosynthesis; polypeptide chain elongation. Functionally, involved in peptide bond synthesis. Stimulates efficient translation and peptide-bond synthesis on native or reconstituted 70S ribosomes in vitro. Probably functions indirectly by altering the affinity of the ribosome for aminoacyl-tRNA, thus increasing their reactivity as acceptors for peptidyl transferase. This chain is Elongation factor P, found in Leptospira borgpetersenii serovar Hardjo-bovis (strain JB197).